Reading from the N-terminus, the 695-residue chain is Sodium-dependent phosphate transport protein 2B (695 aa).

A disordered region spans residues 1 to 44; sequence MAPWPELENAHPNPNKFIEGASGPQSSIPDKDKGTSKTNDSGTP. The Cytoplasmic portion of the chain corresponds to 1 to 90; that stretch reads MAPWPELENA…KWSERDSKGK (90 aa). A helical membrane pass occupies residues 91-111; it reads ILCIFQGIGKFILLLGFLYLF. The Extracellular segment spans residues 112–136; the sequence is VCSLDVLSSAFQLVGGKMAGQFFSN. A helical transmembrane segment spans residues 137–157; sequence NSIMSNPVAGLVIGVLVTVMV. At 158-213 the chain is on the cytoplasmic side; that stretch reads QSSSTSSSIIVSMVASSLLSVRAAIPIIMGANIGTSITNTIVALMQAGDRNEFRRA. The helical transmembrane segment at 214–234 threads the bilayer; the sequence is FAGATVHDFFNWLSVLVLLPL. The Extracellular portion of the chain corresponds to 235–363; sequence EAATHYLEKL…FVNFSLPDLA (129 aa). N-linked (GlcNAc...) asparagine glycans are attached at residues N295, N313, N321, N340, and N356. C303 and C350 are joined by a disulfide. A helical membrane pass occupies residues 364–384; that stretch reads VGIILLTVSLLILCGCLIMIV. Residues 385 to 408 are Cytoplasmic-facing; sequence KLLGSVLRGQVATVIKKTLNTDFP. Residues 409 to 429 traverse the membrane as a helical segment; that stretch reads FPFAWLTGYLAILVGAGMTFI. At 430–486 the chain is on the extracellular side; it reads VQSSSVFTSAMTPLIGIGVISIERAYPLTLGSNIGTTTTAILAALASPGNTLRSSLQ. The chain crosses the membrane as a helical span at residues 487 to 507; sequence IALCHFFFNISGILLWYPIPF. Residues 508 to 526 are Cytoplasmic-facing; it reads TRLPIRLAKGLGNISAKYR. Residues 527–547 traverse the membrane as a helical segment; that stretch reads WFAVFYLIFFFLLTPLTVFGL. Residues 548-551 lie on the Extracellular side of the membrane; sequence SLAG. A helical transmembrane segment spans residues 552 to 572; that stretch reads WPVLVGVGVPIILLILLVLCL. Residues 573–695 are Cytoplasmic-facing; the sequence is RMLQARCPRI…MKALSNTTVF (123 aa).

Belongs to the SLC34A transporter family. Highly expressed in the lung, in type II alveolar cells. Moderately expressed in kidney followed by small intestine.

It is found in the apical cell membrane. It catalyses the reaction 3 Na(+)(out) + phosphate(out) = 3 Na(+)(in) + phosphate(in). Involved in actively transporting phosphate into cells via Na(+) cotransport. The protein is Sodium-dependent phosphate transport protein 2B (Slc34a2) of Rattus norvegicus (Rat).